A 96-amino-acid chain; its full sequence is ATP synthase subunit e, mitochondrial (96 aa).

At serine 2 the chain carries N-acetylserine.

This sequence belongs to the ATPase e subunit family. F-type ATPases have 2 components, CF(1) - the catalytic core - and CF(0) - the membrane proton channel. In yeast, the dimeric form of ATP synthase consists of 17 polypeptides: alpha, beta, gamma, delta, epsilon, 4 (B), 5 (OSCP), 6 (A), 8, 9 (C), d, E (Tim11), f, g, h, i/j and k.

The protein resides in the mitochondrion. The protein localises to the mitochondrion inner membrane. In terms of biological role, mitochondrial membrane ATP synthase (F(1)F(0) ATP synthase or Complex V) produces ATP from ADP in the presence of a proton gradient across the membrane which is generated by electron transport complexes of the respiratory chain. F-type ATPases consist of two structural domains, F(1) - containing the extramembraneous catalytic core, and F(0) - containing the membrane proton channel, linked together by a central stalk and a peripheral stalk. During catalysis, ATP synthesis in the catalytic domain of F(1) is coupled via a rotary mechanism of the central stalk subunits to proton translocation. Part of the complex F(0) domain. Minor subunit located with subunit a in the membrane. This is ATP synthase subunit e, mitochondrial (TIM11) from Saccharomyces cerevisiae (strain ATCC 204508 / S288c) (Baker's yeast).